The primary structure comprises 340 residues: Phenylalanine--tRNA ligase alpha subunit (340 aa).

Residue glutamate 258 participates in Mg(2+) binding.

Belongs to the class-II aminoacyl-tRNA synthetase family. Phe-tRNA synthetase alpha subunit type 1 subfamily. As to quaternary structure, tetramer of two alpha and two beta subunits. It depends on Mg(2+) as a cofactor.

Its subcellular location is the cytoplasm. It catalyses the reaction tRNA(Phe) + L-phenylalanine + ATP = L-phenylalanyl-tRNA(Phe) + AMP + diphosphate + H(+). In Corynebacterium efficiens (strain DSM 44549 / YS-314 / AJ 12310 / JCM 11189 / NBRC 100395), this protein is Phenylalanine--tRNA ligase alpha subunit.